The sequence spans 514 residues: piRNA biogenesis protein EXD1 (514 aa).

A 3'-5' exonuclease domain is found at 30–122; that stretch reads LHAERTWMEK…HGKLCWLQVA (93 aa). Residues 384–422 form a disordered region; that stretch reads SLNKQATNPQHLPPTEEGETSEDSSNKLICTKSKGSEDQ.

It belongs to the EXD1 family. Homodimer. Component of the PET complex, at least composed of EXD1, PIWIL2, TDRD12 and piRNAs.

Its subcellular location is the cytoplasm. Functionally, RNA-binding component of the PET complex, a multiprotein complex required for the processing of piRNAs during spermatogenesis. The piRNA metabolic process mediates the repression of transposable elements during meiosis by forming complexes composed of piRNAs and Piwi proteins and governs the methylation and subsequent repression of transposable elements, preventing their mobilization, which is essential for the germline integrity. The PET complex is required during the secondary piRNAs metabolic process for the PIWIL2 slicing-triggered loading of PIWIL4 piRNAs. In the PET complex, EXD1 probably acts as an RNA adapter. EXD1 is an inactive exonuclease. This is piRNA biogenesis protein EXD1 (EXD1) from Homo sapiens (Human).